The chain runs to 87 residues: MSITASEARQNLFPLIEQVNEDHAPVHITSRKGNAVLMSEEDFTAWTETVHLLRSPRNARRLLDSIAEAEAGDATEHDLIDPDAERA.

This sequence belongs to the phD/YefM antitoxin family. In terms of assembly, forms a complex with YoeB which inhibits its toxin activity.

Antitoxin component of a type II toxin-antitoxin (TA) system. A probable antitoxin for the putative mRNA interferase YeoB. In Streptomyces coelicolor (strain ATCC BAA-471 / A3(2) / M145), this protein is Antitoxin YefM.